A 128-amino-acid chain; its full sequence is ATP synthase epsilon chain (128 aa).

The interval 98–128 (EALDMPSSTPEQAQIKDAAVRRARGQLRASR) is disordered. Basic residues predominate over residues 118-128 (RRARGQLRASR).

Belongs to the ATPase epsilon chain family. As to quaternary structure, F-type ATPases have 2 components, CF(1) - the catalytic core - and CF(0) - the membrane proton channel. CF(1) has five subunits: alpha(3), beta(3), gamma(1), delta(1), epsilon(1). CF(0) has three main subunits: a, b and c.

Its subcellular location is the cell inner membrane. Functionally, produces ATP from ADP in the presence of a proton gradient across the membrane. The sequence is that of ATP synthase epsilon chain from Rhodopirellula baltica (strain DSM 10527 / NCIMB 13988 / SH1).